Reading from the N-terminus, the 1498-residue chain is DNA-directed RNA polymerase subunit beta' (1498 aa).

The Zn(2+) site is built by Cys-67, Cys-69, Cys-82, and Cys-85. Mg(2+) is bound by residues Asp-499, Asp-501, and Asp-503. Residues Cys-867, Cys-943, Cys-950, and Cys-953 each coordinate Zn(2+).

The protein belongs to the RNA polymerase beta' chain family. As to quaternary structure, the RNAP catalytic core consists of 2 alpha, 1 beta, 1 beta' and 1 omega subunit. When a sigma factor is associated with the core the holoenzyme is formed, which can initiate transcription. Mg(2+) is required as a cofactor. Zn(2+) serves as cofactor.

It catalyses the reaction RNA(n) + a ribonucleoside 5'-triphosphate = RNA(n+1) + diphosphate. DNA-dependent RNA polymerase catalyzes the transcription of DNA into RNA using the four ribonucleoside triphosphates as substrates. This chain is DNA-directed RNA polymerase subunit beta', found in Chlorobium luteolum (strain DSM 273 / BCRC 81028 / 2530) (Pelodictyon luteolum).